The sequence spans 124 residues: Ribonuclease pancreatic (124 aa).

A compositionally biased stretch (basic and acidic residues) spans 1 to 13 (KESAAAKFERQHM). The segment at 1 to 24 (KESAAAKFERQHMDPSTSSASSSN) is disordered. 2 residues coordinate substrate: K7 and R10. The Proton acceptor role is filled by H12. 4 disulfides stabilise this stretch: C26/C84, C40/C95, C58/C110, and C65/C72. Residues 41-45 (KPVNT), K66, and R85 contribute to the substrate site. The active-site Proton donor is H119.

The protein belongs to the pancreatic ribonuclease family. Monomer. Interacts with and forms tight 1:1 complexes with RNH1. Dimerization of two such complexes may occur. Interaction with RNH1 inhibits this protein. As to expression, pancreas.

The protein localises to the secreted. It catalyses the reaction an [RNA] containing cytidine + H2O = an [RNA]-3'-cytidine-3'-phosphate + a 5'-hydroxy-ribonucleotide-3'-[RNA].. It carries out the reaction an [RNA] containing uridine + H2O = an [RNA]-3'-uridine-3'-phosphate + a 5'-hydroxy-ribonucleotide-3'-[RNA].. In terms of biological role, endonuclease that catalyzes the cleavage of RNA on the 3' side of pyrimidine nucleotides. Acts on single-stranded and double-stranded RNA. The chain is Ribonuclease pancreatic (RNASE1) from Cervus elaphus (Red deer).